Reading from the N-terminus, the 152-residue chain is Deoxyuridine 5'-triphosphate nucleotidohydrolase (152 aa).

Substrate contacts are provided by residues 71–73 (RSG), Asn-84, 88–90 (LVD), and Met-98.

Belongs to the dUTPase family. The cofactor is Mg(2+).

The enzyme catalyses dUTP + H2O = dUMP + diphosphate + H(+). It participates in pyrimidine metabolism; dUMP biosynthesis; dUMP from dCTP (dUTP route): step 2/2. In terms of biological role, this enzyme is involved in nucleotide metabolism: it produces dUMP, the immediate precursor of thymidine nucleotides and it decreases the intracellular concentration of dUTP so that uracil cannot be incorporated into DNA. This Shewanella oneidensis (strain ATCC 700550 / JCM 31522 / CIP 106686 / LMG 19005 / NCIMB 14063 / MR-1) protein is Deoxyuridine 5'-triphosphate nucleotidohydrolase.